The following is a 276-amino-acid chain: UPF0328 protein ECU04_0100 (276 aa).

The segment at 1 to 24 (MGIIDVQRSHLTATPSKERDAPAH) is disordered.

It belongs to the UPF0328 family.

The chain is UPF0328 protein ECU04_0100 from Encephalitozoon cuniculi (strain GB-M1) (Microsporidian parasite).